Consider the following 97-residue polypeptide: Co-chaperonin GroES (97 aa).

Belongs to the GroES chaperonin family. Heptamer of 7 subunits arranged in a ring. Interacts with the chaperonin GroEL.

The protein localises to the cytoplasm. Its function is as follows. Together with the chaperonin GroEL, plays an essential role in assisting protein folding. The GroEL-GroES system forms a nano-cage that allows encapsulation of the non-native substrate proteins and provides a physical environment optimized to promote and accelerate protein folding. GroES binds to the apical surface of the GroEL ring, thereby capping the opening of the GroEL channel. The protein is Co-chaperonin GroES of Erwinia tasmaniensis (strain DSM 17950 / CFBP 7177 / CIP 109463 / NCPPB 4357 / Et1/99).